A 471-amino-acid polypeptide reads, in one-letter code: MTDLPDSTRWQLWIVAFGFFMQSLDTTIVNTALPSMAQSLGESPLHMHMVIVSYVLTVAVMLPASGWLADKVGVRNIFFTAIVLFTLGSLFCALSGTLNELLLARALQGVGGAMMVPVGRLTVMKIVPREQYMAAMTFVTLPGQVGPLLGPALGGLLVEYASWHWIFLINIPVGIIGAIATLMLMPNYTMQTRRFDLSGFLLLAVGMAVLTLALDGSKGTGLSPLAIAGLVAVGVVALVLYLLHARNNNRALFSLKLFRTRTFSLGLAGSFAGRIGSGMLPFMTPVFLQIGLGFSPFHAGLMMIPMVLGSMGMKRIVVQVVNRFGYRRVLVATTLGLSLVTLLFMTTALLGWYYVLPFVLFLQGMVNSTRFSSMNTLTLKDLPDNLASSGNSLLSMIMQLSMSIGVTIAGLLLGLFGSQHVSIDSGTTQTVFMYTWLSMALIIALPAFIFARVPNDTHQNVAISRRKRSAQ.

The Periplasmic segment spans residues 1-11; that stretch reads MTDLPDSTRWQ. A helical transmembrane segment spans residues 12 to 32; it reads LWIVAFGFFMQSLDTTIVNTA. The Cytoplasmic portion of the chain corresponds to 33–48; that stretch reads LPSMAQSLGESPLHMH. Residues 49–69 traverse the membrane as a helical segment; the sequence is MVIVSYVLTVAVMLPASGWLA. Topologically, residues 70–76 are periplasmic; that stretch reads DKVGVRN. Residues 77–97 traverse the membrane as a helical segment; it reads IFFTAIVLFTLGSLFCALSGT. The Cytoplasmic portion of the chain corresponds to 98-101; sequence LNEL. A helical membrane pass occupies residues 102–124; sequence LLARALQGVGGAMMVPVGRLTVM. At 125–137 the chain is on the periplasmic side; the sequence is KIVPREQYMAAMT. Residues 138–158 form a helical membrane-spanning segment; that stretch reads FVTLPGQVGPLLGPALGGLLV. The Cytoplasmic segment spans residues 159 to 164; it reads EYASWH. The chain crosses the membrane as a helical span at residues 165–185; sequence WIFLINIPVGIIGAIATLMLM. The Periplasmic portion of the chain corresponds to 186-196; it reads PNYTMQTRRFD. A helical transmembrane segment spans residues 197-217; that stretch reads LSGFLLLAVGMAVLTLALDGS. Topologically, residues 218 to 224 are cytoplasmic; the sequence is KGTGLSP. The chain crosses the membrane as a helical span at residues 225–245; it reads LAIAGLVAVGVVALVLYLLHA. Topologically, residues 246–262 are periplasmic; sequence RNNNRALFSLKLFRTRT. Residues 263–283 traverse the membrane as a helical segment; the sequence is FSLGLAGSFAGRIGSGMLPFM. The Cytoplasmic portion of the chain corresponds to 284–285; the sequence is TP. Residues 286 to 306 form a helical membrane-spanning segment; the sequence is VFLQIGLGFSPFHAGLMMIPM. The Periplasmic segment spans residues 307 to 341; the sequence is VLGSMGMKRIVVQVVNRFGYRRVLVATTLGLSLVT. Residues 342 to 362 form a helical membrane-spanning segment; it reads LLFMTTALLGWYYVLPFVLFL. Residues 363-395 are Cytoplasmic-facing; it reads QGMVNSTRFSSMNTLTLKDLPDNLASSGNSLLS. A helical transmembrane segment spans residues 396–416; that stretch reads MIMQLSMSIGVTIAGLLLGLF. The Periplasmic portion of the chain corresponds to 417–430; it reads GSQHVSIDSGTTQT. A helical transmembrane segment spans residues 431 to 451; the sequence is VFMYTWLSMALIIALPAFIFA. The Cytoplasmic portion of the chain corresponds to 452 to 471; it reads RVPNDTHQNVAISRRKRSAQ.

Belongs to the major facilitator superfamily. TCR/Tet family.

It is found in the cell inner membrane. The chain is Putative multidrug resistance protein MdtD from Escherichia coli (strain 55989 / EAEC).